Here is a 34-residue protein sequence, read N- to C-terminus: Protamine-Y1/Y2 (34 aa).

Residues 1–34 are disordered; that stretch reads PRRRRQASRPVRRRRRYRRSTAARRRRRVVRRRR.

Testis.

It localises to the nucleus. It is found in the chromosome. Its function is as follows. Protamines substitute for histones in the chromatin of sperm during the haploid phase of spermatogenesis. They compact sperm DNA into a highly condensed, stable and inactive complex. The polypeptide is Protamine-Y1/Y2 (Thunnus thynnus (Atlantic bluefin tuna)).